Reading from the N-terminus, the 300-residue chain is Tyrosine recombinase XerC (300 aa).

The 87-residue stretch at 2–88 (IQEGKLEQQF…SLRSFYTFLL (87 aa)) folds into the Core-binding (CB) domain. Residues 109 to 294 (RLPKFFYSEE…TKEHLKSTYM (186 aa)) enclose the Tyr recombinase domain. Catalysis depends on residues arginine 150, lysine 174, histidine 246, arginine 249, and histidine 272. Catalysis depends on tyrosine 281, which acts as the O-(3'-phospho-DNA)-tyrosine intermediate.

It belongs to the 'phage' integrase family. XerC subfamily. As to quaternary structure, forms a cyclic heterotetrameric complex composed of two molecules of XerC and two molecules of XerD.

It localises to the cytoplasm. Its function is as follows. Site-specific tyrosine recombinase, which acts by catalyzing the cutting and rejoining of the recombining DNA molecules. The XerC-XerD complex is essential to convert dimers of the bacterial chromosome into monomers to permit their segregation at cell division. It also contributes to the segregational stability of plasmids. This chain is Tyrosine recombinase XerC, found in Listeria monocytogenes serotype 4b (strain F2365).